The sequence spans 194 residues: Cysteine and glycine-rich protein 3 (194 aa).

The interaction with TCAP stretch occupies residues 1–5; that stretch reads MPNWG. Positions 10-61 constitute an LIM zinc-binding 1 domain; that stretch reads CGACEKTVYHAEEIQCNGRSFHKTCFHCMACRKALDSTTVAAHESEIYCKVC. Positions 64–69 match the Nuclear localization signal motif; that stretch reads RRYGPK. Positions 94 to 105 are interaction with CLF2 and isoform 2; it reads QSPKPARSVTTS. 2 positions are modified to phosphoserine: S95 and S153. Positions 120–171 constitute an LIM zinc-binding 2 domain; it reads CPRCGKSVYAAEKVMGGGKPWHKTCFRCAICGKSLESTNVTDKDGELYCKVC.

In terms of assembly, self-associates. Oligomeric in the cytoplasm and monomeric in the nucleus. Homooligomers preferentially form along the actin cytoskeleton. Isoform 2 interacts with isoform 1. Isoform 1 but not isoform 2 interacts with MYOD1 and MYOG. Isoform 1 interacts with TCAP, ACTN2 and NRAP. Isoform 2 interacts with TCAP and alpha-actinin. Interacts with LDHD. Interacts (via N-terminus)with GLRX3 (via C-terminus) and PPP3CA; GLRX3 and calcineurin compete for interaction with CSRP3. Interacts with MYF6. Interacts with CFL2; the stoichiometry influences F-actin depolymerization and possibly two molecules of CFL2 can interact with one molecule of CSRP3 resulting in the highest functional impact; the interaction is stronger with phosphorylated CFL2. In terms of processing, phosphorylated by PKC/PRKCA. Cardiac and slow-twitch skeletal muscles. Isoform 2 is expressed in striated muscle. Isoform 2 is specifically expressed at higher levels in patients with neuromuscular diseases, such as limb-girdle muscular dystrophy 2A (LGMD2A), Duchenne muscular dystrophy (DMD) and dermatomyositis.

The protein resides in the nucleus. The protein localises to the cytoplasm. Its subcellular location is the cytoskeleton. It localises to the myofibril. It is found in the sarcomere. The protein resides in the z line. Positive regulator of myogenesis. Acts as a cofactor for myogenic bHLH transcription factors such as MYOD1, and probably MYOG and MYF6. Enhances the DNA-binding activity of the MYOD1:TCF3 isoform E47 complex and may promote formation of a functional MYOD1:TCF3 isoform E47:MEF2A complex involved in myogenesis. Plays a crucial and specific role in the organization of cytosolic structures in cardiomyocytes. Could play a role in mechanical stretch sensing. May be a scaffold protein that promotes the assembly of interacting proteins at Z-line structures. It is essential for calcineurin anchorage to the Z line. Required for stress-induced calcineurin-NFAT activation. The role in regulation of cytoskeleton dynamics by association with CFL2 is reported conflictingly: Shown to enhance CFL2-mediated F-actin depolymerization dependent on the CSRP3:CFL2 molecular ratio, and also shown to reduce the ability of CLF1 and CFL2 to enhance actin depolymerization. Proposed to contribute to the maintenance of muscle cell integrity through an actin-based mechanism. Can directly bind to actin filaments, cross-link actin filaments into bundles without polarity selectivity and protect them from dilution- and cofilin-mediated depolymerization; the function seems to involve its self-association. In vitro can inhibit PKC/PRKCA activity. Proposed to be involved in cardiac stress signaling by down-regulating excessive PKC/PRKCA signaling. Its function is as follows. May play a role in early sarcomere organization. Overexpression in myotubes negatively regulates myotube differentiation. By association with isoform 1 and thus changing the CSRP3 isoform 1:CFL2 stoichiometry is proposed to down-regulate CFL2-mediated F-actin depolymerization. The protein is Cysteine and glycine-rich protein 3 (CSRP3) of Homo sapiens (Human).